The chain runs to 185 residues: Putative manganese efflux pump MntP (185 aa).

The next 6 helical transmembrane spans lie at 8–28 (LFVI…SIGL), 42–62 (ISFG…GVLF), 66–86 (ILVI…ILML), 103–123 (MYFI…FTVL), 137–157 (IFIG…SGYL), and 165–185 (KYAN…MIFM).

This sequence belongs to the MntP (TC 9.B.29) family.

It is found in the cell membrane. Functionally, probably functions as a manganese efflux pump. This is Putative manganese efflux pump MntP from Clostridium novyi (strain NT).